We begin with the raw amino-acid sequence, 588 residues long: MAFVSNGTERDADEEGFEDAYENIPVASKMDLRCALEECTLALNLFLNNKFSEALEILRPWAKESIYHALGYSTILVMQSAMTFEPQDVQMGISTMKEALQTCQRFRKRTTVVESLSNLVSKQSGDQLTEEEMHAEICYAECLLQKATLTFVQDENMINFIKGGMKIRTSYQIYKECHQLYSLAVTQGKTCSDTHHQFEGGVKLGIGAFNLMLSLLPSRVLRLLEFIGFSGNREFGLSQLREGASGNSIRAILCVLTLLFYHTYISTILGTGEANLEEAEALLEPYLKKFPNGSIILFYAARIDILKGRFEQAQETFQKCIVSQQEWKQIHHLCYWELMWCHSFQQDWLQAYRYADLLCKESKWSKATYVFQKAAILSMLPDDVVKTTGEDIVALFRQVEGLKQRIAGKSIPTEKFAVRKSRRYASDNPVKLTLPALEMVYVWNGFTIVGKRPDLTENVLVTIEKAEVALQSEKNPSEYHPDDLCLVQLLKGVCLKHLGRLLQAELCFNQVIQSEKRVKYDHYLLPFTFYELGLLYKDQGDRDKAIRYIETAKSNYKDYSLESRLHFRIHAALSSLKGSPVSTPSTPQ.

TPR repeat units follow at residues 294 to 327 (SIIL…QQEW), 485 to 518 (CLVQ…EKRV), and 526 to 559 (PFTF…YKDY).

It belongs to the TTC39 family.

Its function is as follows. May be involved in lipid metabolism. The polypeptide is Tetratricopeptide repeat protein 39B (ttc39b) (Xenopus tropicalis (Western clawed frog)).